Consider the following 46-residue polypeptide: Large ribosomal subunit protein bL36 (46 aa).

This sequence belongs to the bacterial ribosomal protein bL36 family.

This chain is Large ribosomal subunit protein bL36, found in Klebsiella pneumoniae (strain 342).